A 408-amino-acid chain; its full sequence is Argininosuccinate synthase (408 aa).

ATP is bound by residues 16–24 (AYSGGLDTS) and A44. Residues Y96 and S101 each contribute to the L-citrulline site. An ATP-binding site is contributed by G126. L-aspartate contacts are provided by T128, N132, and D133. L-citrulline is bound at residue N132. Residues R136, S185, S194, E270, and Y282 each coordinate L-citrulline.

It belongs to the argininosuccinate synthase family. Type 1 subfamily. As to quaternary structure, homotetramer.

It is found in the cytoplasm. It catalyses the reaction L-citrulline + L-aspartate + ATP = 2-(N(omega)-L-arginino)succinate + AMP + diphosphate + H(+). The protein operates within amino-acid biosynthesis; L-arginine biosynthesis; L-arginine from L-ornithine and carbamoyl phosphate: step 2/3. This Shewanella woodyi (strain ATCC 51908 / MS32) protein is Argininosuccinate synthase.